The chain runs to 155 residues: Protein phosphatase 1 regulatory subunit 17 (155 aa).

The tract at residues 41-73 (KKKPRKGKNVQATLNVESDQKKPRRKDTPALHI) is disordered. Residues 58–69 (SDQKKPRRKDTP) are compositionally biased toward basic and acidic residues. A phosphothreonine; by PKG/PRKG1 mark is found at Thr68 and Thr119.

Substrate for cGMP-dependent protein kinase. Phosphorylated by PRKG1 isoform alpha. Phosphorylation of Thr-68 and Thr-119 is required for its phosphatase activity. Post-translationally, substrate for cGMP-dependent protein kinase. As to expression, highly expressed in cerebellum.

In terms of biological role, inhibits phosphatase activities of protein phosphatase 1 (PP1) and protein phosphatase 2A (PP2A) complexes. This chain is Protein phosphatase 1 regulatory subunit 17 (PPP1R17), found in Homo sapiens (Human).